The sequence spans 415 residues: Adipocyte plasma membrane-associated protein (415 aa).

The interval 1-30 (MNEAEGLRQRRPLRPQVITEDSPAQEAKEG) is disordered. At 1-39 (MNEAEGLRQRRPLRPQVITEDSPAQEAKEGSAYSSKVFR) the chain is on the cytoplasmic side. The helical transmembrane segment at 40 to 60 (VTFLTLAASLAVPLLGATVLL) threads the bilayer. Residues 61–412 (DCPIDPQPIS…RSPFICRLNL (352 aa)) lie on the Extracellular side of the membrane. N-linked (GlcNAc...) asparagine glycosylation is present at asparagine 159.

It belongs to the strictosidine synthase family.

It localises to the membrane. The chain is Adipocyte plasma membrane-associated protein (APMAP) from Gallus gallus (Chicken).